The sequence spans 142 residues: Hemoglobin subunit alpha (142 aa).

S1 carries the N-acetylserine modification. A Globin domain is found at 1–142 (SLTAKSKSIV…VASALSEKYR (142 aa)). Residue H59 coordinates O2. H88 contacts heme b.

It belongs to the globin family. Heterotetramer of two alpha chains and two beta chains. Red blood cells.

In terms of biological role, involved in oxygen transport from gills to the various peripheral tissues. The sequence is that of Hemoglobin subunit alpha (hba) from Electrophorus electricus (Electric eel).